We begin with the raw amino-acid sequence, 264 residues long: Alkaline ceramidase 1 (264 aa).

At 1–27 (MPSIFAYQSSEVDWCESNFQYSELVAE) the chain is on the lumenal side. Residues Asp-13, Trp-14, Glu-16, Asn-18, and Glu-27 each coordinate Ca(2+). A helical transmembrane segment spans residues 28–48 (FYNTFSNIPFFIFGPLMMLLM). The Cytoplasmic segment spans residues 49 to 57 (HPYAQKRSR). A helical membrane pass occupies residues 58–78 (YIYVVWVLFMIIGLFSMYFHM). His-77 is a binding site for Zn(2+). Over 79-81 (TLS) the chain is Lumenal. A helical transmembrane segment spans residues 82-102 (FLGQLLDEIAILWLLGSGYSI). Residues 103-119 (WMPRCYFPSFLGGNRSQ) lie on the Cytoplasmic side of the membrane. The helical transmembrane segment at 120–137 (FIRLVFITTVVSTLLSFL) threads the bilayer. Position 138 (Arg-138) is a topological domain, lumenal. The helical transmembrane segment at 139–159 (PTVNAYALNSIALHILYIVCQ) threads the bilayer. Topologically, residues 160–176 (EYRKTSNKELRHLIEVS) are cytoplasmic. The helical transmembrane segment at 177-197 (VVLWAVALTSWISDRLLCSFW) threads the bilayer. Topologically, residues 198 to 206 (QRIHFFYLH) are lumenal. 2 residues coordinate Zn(2+): His-206 and His-210. Residues 207–227 (SIWHVLISITFPYGMVTMALV) form a helical membrane-spanning segment. The Cytoplasmic portion of the chain corresponds to 228-264 (DANYEMPGETLKVRYWPRDSWPVGLPYVEIRGDDKDC).

The protein belongs to the alkaline ceramidase family. Requires Zn(2+) as cofactor. In terms of tissue distribution, mainly expressed in epidermis.

Its subcellular location is the endoplasmic reticulum membrane. The enzyme catalyses an N-acylsphing-4-enine + H2O = sphing-4-enine + a fatty acid. It carries out the reaction N-tetracosanoyl-sphing-4-enine + H2O = tetracosanoate + sphing-4-enine. It catalyses the reaction an N-acylsphinganine + H2O = sphinganine + a fatty acid. The catalysed reaction is N-(9Z-octadecenoyl)-sphing-4-enine + H2O = sphing-4-enine + (9Z)-octadecenoate. The enzyme catalyses N-(15Z-tetracosenoyl)-sphing-4-enine + H2O = (15Z)-tetracosenoate + sphing-4-enine. It functions in the pathway lipid metabolism; sphingolipid metabolism. With respect to regulation, inhibited by sphingosine. Activity is Ca(2+)-dependent. Functionally, endoplasmic reticulum ceramidase that catalyzes the hydrolysis of ceramides into sphingosine and free fatty acids at alkaline pH. Ceramides, sphingosine, and its phosphorylated form sphingosine-1-phosphate are bioactive lipids that mediate cellular signaling pathways regulating several biological processes including cell proliferation, apoptosis and differentiation. Exhibits a strong substrate specificity towards the natural stereoisomer of ceramides with D-erythro-sphingosine as a backbone and has a higher activity towards very long-chain unsaturated fatty acids like the C24:1-ceramide. May also hydrolyze dihydroceramides to produce dihydrosphingosine. ACER1 is a skin-specific ceramidase that regulates the levels of ceramides, sphingosine and sphingosine-1-phosphate in the epidermis, mediates the calcium-induced differentiation of epidermal keratinocytes and more generally plays an important role in skin homeostasis. The chain is Alkaline ceramidase 1 from Homo sapiens (Human).